The chain runs to 147 residues: Organic hydroperoxide resistance transcriptional regulator (147 aa).

Residues 11–141 (ENQLCFLLYA…LKSALYTLLE (131 aa)) enclose the HTH marR-type domain. Cysteine 15 is modified (cysteine sulfenic acid (-SOH); alternate). The residue at position 15 (cysteine 15) is an S-bacillithiol cysteine disulfide; alternate. Cysteine 15 bears the S-cysteinyl cysteine; alternate mark. Positions 15–16 (CF) form a cross-link, n,N-(cysteine-1,S-diyl)phenylalanine (Cys-Phe); alternate. The segment at residues 57-80 (VKKMGEQLYLDSGTLTPMLKRMEQ) is a DNA-binding region (H-T-H motif).

As to quaternary structure, homodimer. Cys-15 is oxidized by organic peroxides to cysteine sulfenic acid (Cys-SOH). This can react with the alpha-amido of the following residue to form the sulfenamide cross-link. Oxidation or cross-linking results in the loss of DNA-binding activity and the inactivation of repressor function. Both the cysteine sulfenic acid and the sulfenamide cross-link can react with free cysteine or bacillithiol (BSH) to form mixed disulfides. Further reduction of OhrR by free sulfhydryl compounds restores repressor activity.

The protein resides in the cytoplasm. With respect to regulation, inactivated by oxidation of Cys-15 to a sulfenic acid. In terms of biological role, organic peroxide sensor. Represses the expression of the peroxide-inducible gene ohrA by cooperative binding to two inverted repeat elements. This chain is Organic hydroperoxide resistance transcriptional regulator (ohrR), found in Bacillus subtilis (strain 168).